The following is a 431-amino-acid chain: uncharacterized protein (431 aa).

Disordered stretches follow at residues 31 to 55, 257 to 291, and 365 to 431; these read VPASRIPEGGNVSASQPNGAHQAGV, QNGGRLSVSKDSDVYPTNGYGNGNQNRQNRSPKQD, and FQSP…HRKA. Residues 42-55 show a composition bias toward polar residues; it reads VSASQPNGAHQAGV. Residues 412-425 are compositionally biased toward basic and acidic residues; sequence VEYRRGRSLRESRE.

This is an uncharacterized protein from Arabidopsis thaliana (Mouse-ear cress).